The following is a 338-amino-acid chain: Ketol-acid reductoisomerase (NADP(+)) (338 aa).

Residues 1 to 181 (MQVYYDKDCD…GGGRTGIIET (181 aa)) form the KARI N-terminal Rossmann domain. Residues 24–27 (FGSQ), Arg-47, Ser-50, Ser-52, and 82–85 (DEFQ) contribute to the NADP(+) site. Residue His-107 is part of the active site. Gly-133 provides a ligand contact to NADP(+). The region spanning 182 to 327 (TFKDETETDL…EKLRSMMPWI (146 aa)) is the KARI C-terminal knotted domain. Mg(2+)-binding residues include Asp-190, Glu-194, Glu-226, and Glu-230. Ser-251 contacts substrate.

Belongs to the ketol-acid reductoisomerase family. The cofactor is Mg(2+).

The enzyme catalyses (2R)-2,3-dihydroxy-3-methylbutanoate + NADP(+) = (2S)-2-acetolactate + NADPH + H(+). It carries out the reaction (2R,3R)-2,3-dihydroxy-3-methylpentanoate + NADP(+) = (S)-2-ethyl-2-hydroxy-3-oxobutanoate + NADPH + H(+). The protein operates within amino-acid biosynthesis; L-isoleucine biosynthesis; L-isoleucine from 2-oxobutanoate: step 2/4. Its pathway is amino-acid biosynthesis; L-valine biosynthesis; L-valine from pyruvate: step 2/4. Involved in the biosynthesis of branched-chain amino acids (BCAA). Catalyzes an alkyl-migration followed by a ketol-acid reduction of (S)-2-acetolactate (S2AL) to yield (R)-2,3-dihydroxy-isovalerate. In the isomerase reaction, S2AL is rearranged via a Mg-dependent methyl migration to produce 3-hydroxy-3-methyl-2-ketobutyrate (HMKB). In the reductase reaction, this 2-ketoacid undergoes a metal-dependent reduction by NADPH to yield (R)-2,3-dihydroxy-isovalerate. The polypeptide is Ketol-acid reductoisomerase (NADP(+)) (Marinobacter nauticus (strain ATCC 700491 / DSM 11845 / VT8) (Marinobacter aquaeolei)).